Consider the following 139-residue polypeptide: Large ribosomal subunit protein bL17 (139 aa).

The segment at 117–139 is disordered; sequence DRDPEAKGQDSGPVEIKDESEEG.

The protein belongs to the bacterial ribosomal protein bL17 family. Part of the 50S ribosomal subunit. Contacts protein L32.

The polypeptide is Large ribosomal subunit protein bL17 (Rhodospirillum centenum (strain ATCC 51521 / SW)).